The primary structure comprises 70 residues: Large ribosomal subunit protein bL31 (70 aa).

4 residues coordinate Zn(2+): C16, C18, C38, and C41.

This sequence belongs to the bacterial ribosomal protein bL31 family. Type A subfamily. In terms of assembly, part of the 50S ribosomal subunit. It depends on Zn(2+) as a cofactor.

Functionally, binds the 23S rRNA. The chain is Large ribosomal subunit protein bL31 from Saccharopolyspora erythraea (strain ATCC 11635 / DSM 40517 / JCM 4748 / NBRC 13426 / NCIMB 8594 / NRRL 2338).